The following is a 158-amino-acid chain: Cyclic pyranopterin monophosphate synthase (158 aa).

Substrate contacts are provided by residues 75–77 (LCH) and 113–114 (ME). The active site involves D128.

Belongs to the MoaC family. In terms of assembly, homohexamer; trimer of dimers.

It carries out the reaction (8S)-3',8-cyclo-7,8-dihydroguanosine 5'-triphosphate = cyclic pyranopterin phosphate + diphosphate. It functions in the pathway cofactor biosynthesis; molybdopterin biosynthesis. Its function is as follows. Catalyzes the conversion of (8S)-3',8-cyclo-7,8-dihydroguanosine 5'-triphosphate to cyclic pyranopterin monophosphate (cPMP). In Roseiflexus castenholzii (strain DSM 13941 / HLO8), this protein is Cyclic pyranopterin monophosphate synthase.